A 172-amino-acid polypeptide reads, in one-letter code: Large ribosomal subunit protein uL10 (172 aa).

It belongs to the universal ribosomal protein uL10 family. Part of the ribosomal stalk of the 50S ribosomal subunit. The N-terminus interacts with L11 and the large rRNA to form the base of the stalk. The C-terminus forms an elongated spine to which L12 dimers bind in a sequential fashion forming a multimeric L10(L12)X complex.

Forms part of the ribosomal stalk, playing a central role in the interaction of the ribosome with GTP-bound translation factors. The sequence is that of Large ribosomal subunit protein uL10 from Lawsonia intracellularis (strain PHE/MN1-00).